Reading from the N-terminus, the 3476-residue chain is Abnormal spindle-like microcephaly-associated protein homolog (3476 aa).

The interval 1 to 34 is disordered; the sequence is MANRRVGRGCWEVSPTERRPPAGLRGPATEEEAS. 6 positions are modified to phosphoserine: Ser280, Ser283, Ser367, Ser392, Ser425, and Ser605. A Calponin-homology (CH) 1 domain is found at 920–1056; sequence KASKEILLAF…LLWKIAFAFQ (137 aa). Positions 1057-1078 form a coiled coil; the sequence is VDISLNLDQLKEEIAFLKHTKS. Residue Ser1103 is modified to Phosphoserine. In terms of domain architecture, Calponin-homology (CH) 2 spans 1110–1261; it reads SENIKLLMDW…YLSFLCARLL (152 aa). IQ domains follow at residues 1347 to 1378, 1393 to 1422, 1582 to 1613, 1605 to 1634, 1632 to 1661, 1655 to 1684, 1728 to 1757, 1751 to 1782, 1801 to 1830, 1824 to 1853, 1874 to 1903, 1897 to 1928, 1947 to 1978, 1970 to 2001, 2020 to 2049, 2043 to 2074, 2093 to 2124, 2116 to 2147, 2239 to 2270, 2262 to 2293, 2311 to 2342, 2334 to 2365, 2384 to 2415, 2407 to 2438, 2457 to 2488, 2530 to 2561, 2624 to 2653, 2665 to 2696, 2688 to 2719, 2738 to 2767, 2814 to 2845, 2859 to 2890, 2909 to 2938, 2932 to 2963, 2954 to 2985, 3029 to 3060, 3079 to 3110, and 3203 to 3234; these read QNKA…IILQ, YLWA…MLKS, LKKT…VIIQ, MKKA…KTRS, TRSA…SVIK, ILTS…TTIK, MRES…AVIS, QRKA…IVIQ, VKKA…AALK, QSIA…SIIK, TKAA…AALK, EHQA…LVIQ, LRHA…IIIQ, QXKC…LLIQ, TKAA…AAVT, CNKA…IIIQ, LKKT…TFIK, MHRA…IVIQ, LRHS…TLIQ, MHVA…VWIQ, VQNA…TFIQ, MHRA…VVIQ, QRRS…TLIQ, MHSS…IFVQ, LRKA…VLIQ, QWHS…IIIQ, QHQA…TVVS, RTQA…TLIQ, VQKS…EKMA, QSRA…RIQF, QKRA…VVLQ, IRSS…STIK, IKNS…KIQA, KVKA…KIIQ, RHRA…LIIQ, FKKS…RLLH, and FTSG…IRLS.

The protein resides in the cytoplasm. The protein localises to the cytoskeleton. It is found in the spindle. It localises to the nucleus. Functionally, probable role in mitotic spindle regulation and coordination of mitotic processes. May have a preferential role in regulating neurogenesis. In Macaca fascicularis (Crab-eating macaque), this protein is Abnormal spindle-like microcephaly-associated protein homolog (ASPM).